A 76-amino-acid chain; its full sequence is Theta defensin subunit B (76 aa).

Residues 1–22 (MRTFALLTAMLLLVALQPQAEA) form the signal peptide. Residues 23–64 (RQARADEAAAQQQPGADDQGMAHSFTRPENAALPLSESAKGL) constitute a propeptide that is removed on maturation. The disordered stretch occupies residues 24–54 (QARADEAAAQQQPGADDQGMAHSFTRPENAA). The segment covering 30–44 (AAAQQQPGADDQGMA) has biased composition (low complexity). Residue Arg-65 forms a Cyclopeptide (Arg-Cys) (interchain with C-73 in subunit A); in form BTD-1 linkage. Arg-65 is covalently cross-linked (Cyclopeptide (Arg-Cys) (interchain with C-73 in subunit B); in form BTD-2). Cys-68 and Cys-73 are disulfide-bonded. Cys-73 is covalently cross-linked (Cyclopeptide (Cys-Arg) (interchain with R-65 in subunit A); in form BTD-1). Cys-73 participates in a covalent cross-link: Cyclopeptide (Cys-Arg) (interchain with R-65 in subunit B); in form BTD-2. A propeptide spanning residues 74-76 (QLL) is cleaved from the precursor.

This sequence belongs to the alpha-defensin family. Theta subfamily. As to quaternary structure, BTD-1 is a cyclic heterodimer composed of subunits A and B; disulfide-linked. BTD-2 is a cyclic homodimer composed of two subunits B; disulfide-linked. Forms a cyclic peptide with subunit A (BTD-1), or subunit B (BTD-2). An additional intersubunit disulfide bond is formed.

BTD-1 and BTD-2 have antimicrobial activity against the Gram-negative bacterium E.coli ML35, the Gram-positive bacterium S.aureus 502a, and the fungus C.albicans 16820. BTD-2 is more effective against E.coli than BTD-1. In Papio anubis (Olive baboon), this protein is Theta defensin subunit B (BTDB).